Consider the following 711-residue polypeptide: Transferrin-binding protein B (711 aa).

Positions 1 to 20 are cleaved as a signal peptide; the sequence is MNNPLVNQAAMVLPVFLLSA. Residue C21 is the site of N-palmitoyl cysteine attachment. Residue C21 is the site of S-diacylglycerol cysteine attachment. Disordered regions lie at residues 33–58, 79–105, 118–146, 225–251, 370–396, 437–492, and 682–711; these read VDTE…QKDQ, SEVK…KRQK, DIYS…KNQA, SKKQ…ESTL, LENG…SENS, PKDS…GDTN, and TEKA…QPVQ. The segment covering 46-56 has biased composition (polar residues); it reads DVSSEKPQAQK. Positions 96-105 are enriched in basic and acidic residues; sequence KPKELPKRQK. Residues 119-146 show a composition bias toward polar residues; it reads IYSSPYLTPSNHQNGSAGNGVNQPKNQA. Residues 373–393 show a composition bias toward low complexity; that stretch reads GAAASGSTGAAASGGAAGTSS. Residues 457–472 are compositionally biased toward basic and acidic residues; it reads FTRKFEHTPESDKKDA. Polar residues-rich tracts occupy residues 474–492 and 684–699; these read AGTQ…GDTN and KATA…SSAT.

Belongs to the TbpB family. Isotype II subfamily. In terms of assembly, binds only human holo-transferrin (TF), via the TF C-terminus. Forms a large complex with TbpA and TF. Interacts via its C-terminal domain with Slam1.

It is found in the cell outer membrane. Its subcellular location is the cell surface. In terms of biological role, neisseria acquires iron by extracting it from serum transferrin (TF) in its human host. Acts as a TF receptor and is required for TF utilization. Involved in the initial capture of TF. Helps select only those TF molecules that can be used as an iron source and concentrates them on the cell surface, maintaining the iron-loaded status of the TF C-terminal lobe until its delivery to TbpA. The polypeptide is Transferrin-binding protein B (tbpB) (Neisseria meningitidis serogroup B).